A 130-amino-acid polypeptide reads, in one-letter code: Small ribosomal subunit protein uS9 (130 aa).

Belongs to the universal ribosomal protein uS9 family.

The polypeptide is Small ribosomal subunit protein uS9 (Histophilus somni (strain 129Pt) (Haemophilus somnus)).